We begin with the raw amino-acid sequence, 550 residues long: Glutamine--tRNA ligase (550 aa).

The short motif at Pro-34–His-44 is the 'HIGH' region element. ATP is bound by residues Glu-35–Asn-37 and His-41–Ser-47. The L-glutamine site is built by Asp-67 and Tyr-212. Residues Thr-231, Arg-261–Leu-262, and Leu-269–Lys-271 contribute to the ATP site. Residues Val-268–Arg-272 carry the 'KMSKS' region motif.

It belongs to the class-I aminoacyl-tRNA synthetase family. As to quaternary structure, monomer.

It localises to the cytoplasm. The catalysed reaction is tRNA(Gln) + L-glutamine + ATP = L-glutaminyl-tRNA(Gln) + AMP + diphosphate. The sequence is that of Glutamine--tRNA ligase from Buchnera aphidicola subsp. Baizongia pistaciae (strain Bp).